Here is a 181-residue protein sequence, read N- to C-terminus: Oligoribonuclease (181 aa).

In terms of domain architecture, Exonuclease spans 8–171; that stretch reads LIWIDLEMTG…QDIQESIAEL (164 aa). Residue tyrosine 129 is part of the active site.

The protein belongs to the oligoribonuclease family.

The protein resides in the cytoplasm. In terms of biological role, 3'-to-5' exoribonuclease specific for small oligoribonucleotides. The chain is Oligoribonuclease from Shewanella baltica (strain OS155 / ATCC BAA-1091).